Here is a 272-residue protein sequence, read N- to C-terminus: Outer surface protein A (272 aa).

The N-terminal stretch at 1–16 (MKKYLLGIGLILALIA) is a signal peptide. C17 carries the N-palmitoyl cysteine lipid modification. C17 is lipidated: S-diacylglycerol cysteine.

It belongs to the OspA lipoprotein family.

It is found in the cell outer membrane. The protein resides in the cell surface. This is Outer surface protein A from Borreliella burgdorferi (Lyme disease spirochete).